Consider the following 1277-residue polypeptide: Neural cell adhesion molecule L1 (1277 aa).

Residues 1-34 (MAHTQRQQGGSRGQWSRCLLLLLLLPLAAQPGRA) form the signal peptide. Over 35–1135 (AIQIPSSYYI…VQPSFATQGW (1101 aa)) the chain is Extracellular. 5 Ig-like C2-type domains span residues 51–140 (PAIT…TAVS), 150–241 (PPVQ…EPIT), 256–344 (PQMM…YTVT), 349–437 (PYWT…TNVY), and 443–528 (PQIL…AEVE). 5 disulfide bridges follow: Cys72–Cys129, Cys173–Cys224, Cys280–Cys328, Cys370–Cys421, and Cys465–Cys514. Asn317 is a glycosylation site (N-linked (GlcNAc...) asparagine). 3 N-linked (GlcNAc...) asparagine glycosylation sites follow: Asn503, Asn520, and Asn531. An Ig-like C2-type 6 domain is found at 532–623 (RTVILSPPQA…DMVEASSTLT (92 aa)). A disulfide bridge links Cys554 with Cys607. Fibronectin type-III domains are found at residues 630–725 (PPVH…TPAD), 730–824 (NPED…SGED), 829–931 (APLN…TPEG), 935–1030 (PPMS…TLEG), and 1032–1129 (PPAN…VQPS). The tract at residues 714–740 (SKLSDLYKTPADAPDSNPEDVRSESTD) is disordered. 2 N-linked (GlcNAc...) asparagine glycosylation sites follow: Asn794 and Asn839. 5 N-linked (GlcNAc...) asparagine glycosylation sites follow: Asn1035, Asn1046, Asn1068, Asn1083, and Asn1108. Residues 1136-1156 (FIGVVSAVVLLLLVLLILCFI) form a helical membrane-spanning segment. The Cytoplasmic segment spans residues 1157 to 1277 (KRSKGGKYSV…ATNGAPSFLN (121 aa)). 2 disordered regions span residues 1163-1216 (KYSV…LCSE) and 1232-1277 (NMDE…SFLN). Residues 1165-1201 (SVKDKEDGPMDSEARPMKDETFGEYRSLESDLEEKRT) show a composition bias toward basic and acidic residues. The segment covering 1232–1242 (NMDESLASQFS) has biased composition (polar residues). Residues 1255–1277 (PDNSPLNPAANPPATNGAPSFLN) are compositionally biased toward low complexity.

Belongs to the immunoglobulin superfamily. L1/neurofascin/NgCAM family.

It localises to the cell membrane. Its subcellular location is the cell projection. The protein resides in the growth cone. In terms of biological role, neural cell adhesion molecule involved in the dynamics of cell adhesion and in the generation of transmembrane signals at tyrosine kinase receptors. During brain development, critical in multiple processes, including neuronal migration, axonal growth and fasciculation, and synaptogenesis. In the mature brain, plays a role in the dynamics of neuronal structure and function, including synaptic plasticity. In Takifugu rubripes (Japanese pufferfish), this protein is Neural cell adhesion molecule L1 (l1cam).